Here is a 343-residue protein sequence, read N- to C-terminus: Serpentine receptor class alpha-11 (343 aa).

Residues 1-24 are Extracellular-facing; it reads MSSPDTPVCASPQQMEMYNSHFYT. A helical membrane pass occupies residues 25-45; sequence CALFFNLLIAFTSMTLIIMAI. The Cytoplasmic portion of the chain corresponds to 46 to 60; sequence RKLLTESIINTSTRM. A helical transmembrane segment spans residues 61–81; the sequence is FLIVGLLCCSLHQTAYIVLRV. Residues 82 to 106 lie on the Extracellular side of the membrane; it reads QVIFQILFKLDQPCKLYYKAYDCKY. The helical transmembrane segment at 107–127 threads the bilayer; it reads VTFSLVAGNTGMIFIQSAMTI. Over 128 to 146 the chain is Cytoplasmic; it reads DRILTTVFTNLWPKLKYWP. The helical transmembrane segment at 147–167 threads the bilayer; the sequence is GVILSSFMIGCNFTNVQFIFW. Residues 168–192 are Extracellular-facing; it reads NDPLTDYVPTCGQFPPKSVGRFQKF. A helical transmembrane segment spans residues 193–213; it reads LEIALYMSLAHMVINVIILYI. The Cytoplasmic segment spans residues 214-247; the sequence is NVVQDRRQRLVSTHDQSQSFDVNQRFQSRVALKS. The helical transmembrane segment at 248–268 threads the bilayer; the sequence is TQAIFFLSMSQFLSCFLYTIF. The Extracellular portion of the chain corresponds to 269 to 291; the sequence is TKLYLTLQPDMTPLQSGLTLALT. A helical membrane pass occupies residues 292-312; that stretch reads YTTPYACIAIPSLIMVTLTFI. Residues 313 to 343 are Cytoplasmic-facing; it reads RNQRHRSINALRSQTETGDQYMQKIKKIWDK.

Belongs to the nematode receptor-like protein sra family.

It is found in the membrane. Its function is as follows. A G protein-coupled receptor required for olfactory imprinting a requisite in ordorant response such as benzaldehyde and isoamylalcohol. This Caenorhabditis briggsae protein is Serpentine receptor class alpha-11.